The following is an 89-amino-acid chain: Small ribosomal subunit protein uS15 (89 aa).

A compositionally biased stretch (basic and acidic residues) spans 1-13 (MTISKERKEEVIS). Positions 1-24 (MTISKERKEEVISEHGAAAGDTGS) are disordered.

The protein belongs to the universal ribosomal protein uS15 family. Part of the 30S ribosomal subunit. Forms a bridge to the 50S subunit in the 70S ribosome, contacting the 23S rRNA.

Its function is as follows. One of the primary rRNA binding proteins, it binds directly to 16S rRNA where it helps nucleate assembly of the platform of the 30S subunit by binding and bridging several RNA helices of the 16S rRNA. Forms an intersubunit bridge (bridge B4) with the 23S rRNA of the 50S subunit in the ribosome. This chain is Small ribosomal subunit protein uS15, found in Rhodopirellula baltica (strain DSM 10527 / NCIMB 13988 / SH1).